The sequence spans 170 residues: Large ribosomal subunit protein uL10 (170 aa).

The protein belongs to the universal ribosomal protein uL10 family. As to quaternary structure, part of the ribosomal stalk of the 50S ribosomal subunit. The N-terminus interacts with L11 and the large rRNA to form the base of the stalk. The C-terminus forms an elongated spine to which L12 dimers bind in a sequential fashion forming a multimeric L10(L12)X complex.

In terms of biological role, forms part of the ribosomal stalk, playing a central role in the interaction of the ribosome with GTP-bound translation factors. In Novosphingobium aromaticivorans (strain ATCC 700278 / DSM 12444 / CCUG 56034 / CIP 105152 / NBRC 16084 / F199), this protein is Large ribosomal subunit protein uL10.